A 309-amino-acid chain; its full sequence is THAP domain-containing protein 7 (309 aa).

The segment at 1 to 93 adopts a THAP-type zinc-finger fold; that stretch reads MPRHCSAAGC…LKEGAVPTIF (93 aa). Ser162 bears the Phosphoserine mark. The disordered stretch occupies residues 176 to 210; it reads SDLLGPLGAQADEAGCSTQPSPEQHPSPLEPQPAS. Residues 198–209 show a composition bias toward pro residues; sequence EQHPSPLEPQPA. Ser210 carries the phosphoserine modification. Residues 229 to 232 carry the HCFC1-binding motif (HBM) motif; it reads EHSY.

As to quaternary structure, forms homodimers. Interacts with HDAC3 and nuclear hormone receptor corepressors. Interacts via HBM with HCFC1.

The protein resides in the nucleus. It is found in the chromosome. Chromatin-associated, histone tail-binding protein that represses transcription via recruitment of HDAC3 and nuclear hormone receptor corepressors. The chain is THAP domain-containing protein 7 (Thap7) from Mus musculus (Mouse).